The chain runs to 127 residues: MRKLVFGLFVLAASVAPAAAQDAASGEQVFKQCLVCHSIGPGAKNKVGPVLNGLFGRHSGTIEGFAYSDANKNSGITWTEEVFREYIRDPKAKIPGTKMIFAGVKDEQKVSDLIAYIKQFNADGSKK.

The N-terminal stretch at 1-20 (MRKLVFGLFVLAASVAPAAA) is a signal peptide. Gln-21 is subject to Pyrrolidone carboxylic acid. Residues Cys-33, Cys-36, His-37, and Met-99 each contribute to the heme c site.

Belongs to the cytochrome c family. Post-translationally, binds 1 heme c group covalently per subunit.

Cytochrome c2 is found mainly in purple, non-sulfur, photosynthetic bacteria where it functions as the electron donor to the oxidized bacteriochlorophyll in the photophosphorylation pathway. However, it may also have a role in the respiratory chain and is found in some non-photosynthetic bacteria. The protein is Cytochrome c2 (cycA) of Blastochloris viridis (Rhodopseudomonas viridis).